A 191-amino-acid chain; its full sequence is UPF0302 protein USA300HOU_1400 (191 aa).

It belongs to the UPF0302 family.

This chain is UPF0302 protein USA300HOU_1400, found in Staphylococcus aureus (strain USA300 / TCH1516).